The chain runs to 193 residues: Ion-translocating oxidoreductase complex subunit A (193 aa).

Helical transmembrane passes span 5 to 25 (FLLF…FLGL), 39 to 59 (IGMG…SWLV), 62 to 82 (FILL…LVIA), 102 to 122 (LLGI…VALL), 134 to 154 (AIYG…FAAI), and 171 to 191 (SIGL…SGLV).

Belongs to the NqrDE/RnfAE family. The complex is composed of six subunits: RnfA, RnfB, RnfC, RnfD, RnfE and RnfG.

Its subcellular location is the cell inner membrane. Its function is as follows. Part of a membrane-bound complex that couples electron transfer with translocation of ions across the membrane. In Photorhabdus laumondii subsp. laumondii (strain DSM 15139 / CIP 105565 / TT01) (Photorhabdus luminescens subsp. laumondii), this protein is Ion-translocating oxidoreductase complex subunit A.